The sequence spans 138 residues: Actin-related protein 2/3 complex subunit 5 (138 aa).

Residues 1–21 (MNYEDDNVESGQAGKSDAEYK) are disordered.

It belongs to the ARPC5 family. In terms of assembly, component of the Arp2/3 complex composed of arpB/Arp2, arpC/Arp3, arcA/p41-arc, arcB/p34-arc, arcC/p21-arc, arcD/p20-arc and arcE/p16-arc. Interacts with carmil (via the region between the LRR domain and COOH-terminal proline-rich domain); carmil is required for Arp2/3-dependent actin nucleation. Arp2/3 complex, MyoB, MyoC, and the alpha and beta subunits of capping protein all form a larger complex with carmil.

It localises to the cytoplasm. The protein localises to the cytoskeleton. Its subcellular location is the cytosol. The protein resides in the cell cortex. It is found in the cell projection. It localises to the pseudopodium. Its function is as follows. Functions as a component of the Arp2/3 complex which is involved in regulation of actin polymerization and together with an activating nucleation-promoting factor (NPF) mediates the formation of branched actin networks. Seems to contact the pointed end of the daughter actin filament. The Arp2/3 complex is involved in organizing the actin system in cell motility and chemotaxis, in phagocytosis and macropinocytosis, at late steps of endosome processing, and in mitosis. In concert with a group of other proteins, the Arp2/3 complex plays a general role in the rapid activation and adaptation of the actin system to its multiple functions. The protein is Actin-related protein 2/3 complex subunit 5 (arcE) of Dictyostelium discoideum (Social amoeba).